The chain runs to 589 residues: Ectoderm-neural cortex protein 1 (589 aa).

The 69-residue stretch at 46–114 (TDVLLHAGNR…AYSSRVIINE (69 aa)) folds into the BTB domain. 6 Kelch repeats span residues 296 to 340 (ALFL…AIGC), 341 to 388 (KVYI…ELKH), 389 to 444 (CLYV…SAKL), 446 to 492 (LFAF…VLGN), 494 to 538 (IFIM…ASGN), and 539 to 585 (KLYV…STWK).

As to quaternary structure, binds to RB1. Hypophosphorylated RB1 associates with ENC1 during neuronal differentiation, while hyperphosphorylated RB1 associates with ENC1 in undifferentiating cells. Part of a complex that contains CUL3, RBX1 and ENC1. Interacts indirectly with KEAP1. In terms of processing, ubiquitinated by E3 ubiquitin ligase complex formed by CUL3 and RBX1 and probably targeted for proteasome-independent degradation. Quinone-induced oxidative stress increases its ubiquitination. Primarily expressed in the nervous system.

It is found in the nucleus matrix. It localises to the cytoplasm. Its subcellular location is the cytoskeleton. Actin-binding protein involved in the regulation of neuronal process formation and in differentiation of neural crest cells. Down-regulates transcription factor NF2L2/NRF2 by decreasing the rate of protein synthesis and not via a ubiquitin-mediated proteasomal degradation mechanism. This is Ectoderm-neural cortex protein 1 (Enc1) from Mus musculus (Mouse).